Reading from the N-terminus, the 340-residue chain is Ketol-acid reductoisomerase (NADP(+)) (340 aa).

One can recognise a KARI N-terminal Rossmann domain in the interval 3–183 (INVYYDKDCD…GGGRTGIIET (181 aa)). Residues 26–29 (FGSQ), serine 54, and 84–87 (DELQ) contribute to the NADP(+) site. Histidine 109 is a catalytic residue. NADP(+) is bound at residue glycine 135. Residues 184–329 (TFKDETETDL…KKLRAMMPWI (146 aa)) enclose the KARI C-terminal knotted domain. Mg(2+)-binding residues include aspartate 192, glutamate 196, glutamate 228, and glutamate 232. Serine 253 provides a ligand contact to substrate.

It belongs to the ketol-acid reductoisomerase family. Requires Mg(2+) as cofactor.

The enzyme catalyses (2R)-2,3-dihydroxy-3-methylbutanoate + NADP(+) = (2S)-2-acetolactate + NADPH + H(+). The catalysed reaction is (2R,3R)-2,3-dihydroxy-3-methylpentanoate + NADP(+) = (S)-2-ethyl-2-hydroxy-3-oxobutanoate + NADPH + H(+). Its pathway is amino-acid biosynthesis; L-isoleucine biosynthesis; L-isoleucine from 2-oxobutanoate: step 2/4. It functions in the pathway amino-acid biosynthesis; L-valine biosynthesis; L-valine from pyruvate: step 2/4. In terms of biological role, involved in the biosynthesis of branched-chain amino acids (BCAA). Catalyzes an alkyl-migration followed by a ketol-acid reduction of (S)-2-acetolactate (S2AL) to yield (R)-2,3-dihydroxy-isovalerate. In the isomerase reaction, S2AL is rearranged via a Mg-dependent methyl migration to produce 3-hydroxy-3-methyl-2-ketobutyrate (HMKB). In the reductase reaction, this 2-ketoacid undergoes a metal-dependent reduction by NADPH to yield (R)-2,3-dihydroxy-isovalerate. This is Ketol-acid reductoisomerase (NADP(+)) from Campylobacter concisus (strain 13826).